Consider the following 703-residue polypeptide: Fatty acid oxidation complex subunit alpha (703 aa).

Positions 1–190 (MSEQKAFSLN…KLGVVDACVP (190 aa)) are enoyl-CoA hydratase. The interval 308–703 (AAVKKVGVLG…TRAGEGRTFY (396 aa)) is 3-hydroxyacyl-CoA dehydrogenase.

The protein in the N-terminal section; belongs to the enoyl-CoA hydratase/isomerase family. This sequence in the central section; belongs to the 3-hydroxyacyl-CoA dehydrogenase family. As to quaternary structure, heterotetramer of two alpha chains (FadJ) and two beta chains (FadI).

The protein localises to the cytoplasm. The enzyme catalyses a (3S)-3-hydroxyacyl-CoA = a (2E)-enoyl-CoA + H2O. It catalyses the reaction a 4-saturated-(3S)-3-hydroxyacyl-CoA = a (3E)-enoyl-CoA + H2O. The catalysed reaction is a (3S)-3-hydroxyacyl-CoA + NAD(+) = a 3-oxoacyl-CoA + NADH + H(+). It carries out the reaction (3S)-3-hydroxybutanoyl-CoA = (3R)-3-hydroxybutanoyl-CoA. It functions in the pathway lipid metabolism; fatty acid beta-oxidation. Its function is as follows. Catalyzes the formation of a hydroxyacyl-CoA by addition of water on enoyl-CoA. Also exhibits 3-hydroxyacyl-CoA epimerase and 3-hydroxyacyl-CoA dehydrogenase activities. This is Fatty acid oxidation complex subunit alpha from Vibrio parahaemolyticus serotype O3:K6 (strain RIMD 2210633).